The following is a 515-amino-acid chain: Maturase K (515 aa).

Belongs to the intron maturase 2 family. MatK subfamily.

Its subcellular location is the plastid. The protein resides in the chloroplast. In terms of biological role, usually encoded in the trnK tRNA gene intron. Probably assists in splicing its own and other chloroplast group II introns. The sequence is that of Maturase K from Pinus sibirica (Siberian pine).